Here is a 94-residue protein sequence, read N- to C-terminus: Aspartyl/glutamyl-tRNA(Asn/Gln) amidotransferase subunit C (94 aa).

Belongs to the GatC family. Heterotrimer of A, B and C subunits.

The enzyme catalyses L-glutamyl-tRNA(Gln) + L-glutamine + ATP + H2O = L-glutaminyl-tRNA(Gln) + L-glutamate + ADP + phosphate + H(+). The catalysed reaction is L-aspartyl-tRNA(Asn) + L-glutamine + ATP + H2O = L-asparaginyl-tRNA(Asn) + L-glutamate + ADP + phosphate + 2 H(+). Allows the formation of correctly charged Asn-tRNA(Asn) or Gln-tRNA(Gln) through the transamidation of misacylated Asp-tRNA(Asn) or Glu-tRNA(Gln) in organisms which lack either or both of asparaginyl-tRNA or glutaminyl-tRNA synthetases. The reaction takes place in the presence of glutamine and ATP through an activated phospho-Asp-tRNA(Asn) or phospho-Glu-tRNA(Gln). The protein is Aspartyl/glutamyl-tRNA(Asn/Gln) amidotransferase subunit C of Caldicellulosiruptor saccharolyticus (strain ATCC 43494 / DSM 8903 / Tp8T 6331).